Consider the following 207-residue polypeptide: MGKGTLYIVSAPSGAGKSSLIAALLEQNPTYAMKVSVSHTTRGMRPGEQDGVHYHFVEKEHFIELIGKGEFLEYAEVFGNYYGTSRVWIENTLNKGIDVFLDIDWQGARQIRSQMPEAKSIFILPPSKEELERRLNTRGQDSDAVIAKRMGEAKSEISHYSEYDYVIINDDFDVALMDFKAIIRAERLKQDKQAAKYSAMLSALLAE.

In terms of domain architecture, Guanylate kinase-like spans 4-184 (GTLYIVSAPS…ALMDFKAIIR (181 aa)). 11–18 (APSGAGKS) contributes to the ATP binding site.

The protein belongs to the guanylate kinase family.

The protein resides in the cytoplasm. It carries out the reaction GMP + ATP = GDP + ADP. The catalysed reaction is dZMP + ATP = dZDP + ADP. Its pathway is purine metabolism. Functionally, essential for recycling GMP and indirectly, cGMP. Its function is as follows. (Microbial infection) Catalyzes the phosphorylation of dZMP to dZDP, when the bacterium is infected by a phage that produces the substrate for the synthesis of dZTP (2- amino-2'-deoxyadenosine 5'-triphosphate), which is then used by the phage as a DNA polymerase substrate. This chain is Guanylate kinase (gmk), found in Vibrio cholerae serotype O1 (strain ATCC 39315 / El Tor Inaba N16961).